The chain runs to 515 residues: Histidine ammonia-lyase (515 aa).

The 5-imidazolinone (Ala-Gly) cross-link spans 148-150; that stretch reads ASG. S149 carries the 2,3-didehydroalanine (Ser) modification.

Belongs to the PAL/histidase family. Post-translationally, contains an active site 4-methylidene-imidazol-5-one (MIO), which is formed autocatalytically by cyclization and dehydration of residues Ala-Ser-Gly.

It is found in the cytoplasm. It catalyses the reaction L-histidine = trans-urocanate + NH4(+). It participates in amino-acid degradation; L-histidine degradation into L-glutamate; N-formimidoyl-L-glutamate from L-histidine: step 1/3. This chain is Histidine ammonia-lyase, found in Pseudomonas syringae pv. tomato (strain ATCC BAA-871 / DC3000).